Consider the following 340-residue polypeptide: GTP 3',8-cyclase (340 aa).

Residues 8–227 form the Radical SAM core domain; that stretch reads KLGRPIRDLR…SMIQEEFDIE (220 aa). A GTP-binding site is contributed by Arg17. Positions 24 and 28 each coordinate [4Fe-4S] cluster. Tyr30 provides a ligand contact to S-adenosyl-L-methionine. Cys31 contributes to the [4Fe-4S] cluster binding site. Arg71 is a GTP binding site. Gly75 contributes to the S-adenosyl-L-methionine binding site. Thr102 lines the GTP pocket. Ser126 provides a ligand contact to S-adenosyl-L-methionine. Lys163 serves as a coordination point for GTP. Residue Met197 coordinates S-adenosyl-L-methionine. [4Fe-4S] cluster contacts are provided by Cys261 and Cys264. 266-268 is a GTP binding site; that stretch reads RAR. A [4Fe-4S] cluster-binding site is contributed by Cys278.

The protein belongs to the radical SAM superfamily. MoaA family. In terms of assembly, monomer and homodimer. It depends on [4Fe-4S] cluster as a cofactor.

The enzyme catalyses GTP + AH2 + S-adenosyl-L-methionine = (8S)-3',8-cyclo-7,8-dihydroguanosine 5'-triphosphate + 5'-deoxyadenosine + L-methionine + A + H(+). It functions in the pathway cofactor biosynthesis; molybdopterin biosynthesis. Its function is as follows. Catalyzes the cyclization of GTP to (8S)-3',8-cyclo-7,8-dihydroguanosine 5'-triphosphate. The protein is GTP 3',8-cyclase of Staphylococcus carnosus (strain TM300).